We begin with the raw amino-acid sequence, 350 residues long: Biotin synthase (350 aa).

A Radical SAM core domain is found at 63–281; the sequence is GDIELATLLS…IAVARITMPK (219 aa). 3 residues coordinate [4Fe-4S] cluster: cysteine 78, cysteine 82, and cysteine 85. Cysteine 122, cysteine 153, cysteine 213, and arginine 285 together coordinate [2Fe-2S] cluster.

Belongs to the radical SAM superfamily. Biotin synthase family. Homodimer. The cofactor is [4Fe-4S] cluster. [2Fe-2S] cluster is required as a cofactor.

The catalysed reaction is (4R,5S)-dethiobiotin + (sulfur carrier)-SH + 2 reduced [2Fe-2S]-[ferredoxin] + 2 S-adenosyl-L-methionine = (sulfur carrier)-H + biotin + 2 5'-deoxyadenosine + 2 L-methionine + 2 oxidized [2Fe-2S]-[ferredoxin]. It functions in the pathway cofactor biosynthesis; biotin biosynthesis; biotin from 7,8-diaminononanoate: step 2/2. Functionally, catalyzes the conversion of dethiobiotin (DTB) to biotin by the insertion of a sulfur atom into dethiobiotin via a radical-based mechanism. The chain is Biotin synthase from Acidovorax sp. (strain JS42).